The chain runs to 694 residues: DNA-binding protein RFX2 (694 aa).

Positions 174–249 form a DNA-binding region, RFX-type winged-helix; it reads HLQWLLDNYE…YHYYGIRLKP (76 aa). Disordered regions lie at residues 267 to 310 and 658 to 694; these read QQPI…QHHQ and KDDVSELGSDTEGDPHISGQPPVKRERVELNHSMQEM. Positions 289–299 are enriched in polar residues; it reads PANSSQHASPE. Residues 300–310 show a composition bias toward low complexity; it reads QSVAAQSQHHQ.

The protein belongs to the RFX family. In terms of assembly, homodimer. Heterodimer; heterodimerizes with other rfx proteins. In terms of tissue distribution, preferentially expressed in ciliated tissues, such as neural tube, gastrocoel roof plate, epidermal multiciliated cells, otic vesicles and kidneys.

It is found in the nucleus. The protein resides in the cytoplasm. Functionally, transcription factor that acts as a key regulator of ciliogenesis. Specifically regulates expression of genes required for cilium assembly and function. Recognizes and binds the X-box, a regulatory motif with DNA sequence 5'-GTNRCC(0-3N)RGYAAC-3' present on promoters. Required for neural tube closure and neural ciliogenesis. The protein is DNA-binding protein RFX2 (rfx2) of Xenopus laevis (African clawed frog).